The primary structure comprises 167 residues: Phosphopantetheine adenylyltransferase (167 aa).

Threonine 9 is a binding site for substrate. Residues 9 to 10 and histidine 17 each bind ATP; that span reads TF. Substrate contacts are provided by lysine 41, leucine 73, and arginine 87. ATP contacts are provided by residues 88 to 90, glutamate 98, and 123 to 129; these read GLR and YQFISGT.

Belongs to the bacterial CoaD family. Homohexamer. It depends on Mg(2+) as a cofactor.

The protein localises to the cytoplasm. The enzyme catalyses (R)-4'-phosphopantetheine + ATP + H(+) = 3'-dephospho-CoA + diphosphate. It functions in the pathway cofactor biosynthesis; coenzyme A biosynthesis; CoA from (R)-pantothenate: step 4/5. Its function is as follows. Reversibly transfers an adenylyl group from ATP to 4'-phosphopantetheine, yielding dephospho-CoA (dPCoA) and pyrophosphate. This chain is Phosphopantetheine adenylyltransferase, found in Bordetella avium (strain 197N).